Consider the following 286-residue polypeptide: ATP phosphoribosyltransferase (286 aa).

The protein belongs to the ATP phosphoribosyltransferase family. Long subfamily. Mg(2+) is required as a cofactor.

It is found in the cytoplasm. It catalyses the reaction 1-(5-phospho-beta-D-ribosyl)-ATP + diphosphate = 5-phospho-alpha-D-ribose 1-diphosphate + ATP. It participates in amino-acid biosynthesis; L-histidine biosynthesis; L-histidine from 5-phospho-alpha-D-ribose 1-diphosphate: step 1/9. Feedback inhibited by histidine. Its function is as follows. Catalyzes the condensation of ATP and 5-phosphoribose 1-diphosphate to form N'-(5'-phosphoribosyl)-ATP (PR-ATP). Has a crucial role in the pathway because the rate of histidine biosynthesis seems to be controlled primarily by regulation of HisG enzymatic activity. The chain is ATP phosphoribosyltransferase from Cytophaga hutchinsonii (strain ATCC 33406 / DSM 1761 / CIP 103989 / NBRC 15051 / NCIMB 9469 / D465).